Here is a 446-residue protein sequence, read N- to C-terminus: Chromosomal replication initiator protein DnaA (446 aa).

A domain I, interacts with DnaA modulators region spans residues 1-81 (MENISDLWNS…AKLAIRFIIP (81 aa)). The tract at residues 81–109 (PQSQAEEDIDLPPVKPNPAQDDSAHLPQS) is domain II. The domain III, AAA+ region stretch occupies residues 110-326 (MLNPKYTFDT…GALIRVVAYS (217 aa)). Gly-154, Gly-156, Lys-157, and Thr-158 together coordinate ATP. The domain IV, binds dsDNA stretch occupies residues 327 to 446 (SLINKDINAD…QVEEINGILK (120 aa)).

It belongs to the DnaA family. Oligomerizes as a right-handed, spiral filament on DNA at oriC.

The protein resides in the cytoplasm. Its function is as follows. Plays an essential role in the initiation and regulation of chromosomal replication. ATP-DnaA binds to the origin of replication (oriC) to initiate formation of the DNA replication initiation complex once per cell cycle. Binds the DnaA box (a 9 base pair repeat at the origin) and separates the double-stranded (ds)DNA. Forms a right-handed helical filament on oriC DNA; dsDNA binds to the exterior of the filament while single-stranded (ss)DNA is stabiized in the filament's interior. The ATP-DnaA-oriC complex binds and stabilizes one strand of the AT-rich DNA unwinding element (DUE), permitting loading of DNA polymerase. After initiation quickly degrades to an ADP-DnaA complex that is not apt for DNA replication. Binds acidic phospholipids. The protein is Chromosomal replication initiator protein DnaA of Bacillus cereus (strain B4264).